Consider the following 293-residue polypeptide: Homeobox protein ceh-24 (293 aa).

2 stretches are compositionally biased toward basic and acidic residues: residues 1 to 15 and 22 to 38; these read MSEKESPSPQHKKDE and QETKDSEDDATKKMKIK. Disordered regions lie at residues 1–38 and 203–256; these read MSEKESPSPQHKKDEVVDDTEQETKDSEDDATKKMKIK and EKEK…SNGV. Positions 144–203 form a DNA-binding region, homeobox; the sequence is RRKRRVLFSQAQVYELERRFKQAKYLTAPEREQLANSIRLTPTQVKIWFQNHRYKCKRQE.

The protein belongs to the NK-2 homeobox family. Expressed in the 8 vulval muscles, 8-10 ventral neurons in the head and in the most posterior pharyngeal muscle cell, m8.

It localises to the nucleus. Functionally, probable transcriptional regulator that is required in neural development for the normal formation of sublateral cholinergic motor neuron processes. Plays a role in regulating the expression of acetylcholine transporter protein unc-17 in the sublateral processes. In particular, it is required in sublateral motor neurons for a left-right turning behavior that occurs during the lethargus phase of the normal sleep process called 'flipping'. During 'flipping' animals rotate 180 degrees about their longitudinal axis. The protein is Homeobox protein ceh-24 of Caenorhabditis briggsae.